A 499-amino-acid polypeptide reads, in one-letter code: Cryptochrome-1 (499 aa).

FAD is bound by residues Arg-190, Ser-218, Ser-220, Gln-261, His-328, 360–362, Cys-366, and Asn-369; that span reads DAD.

It belongs to the DNA photolyase class-1 family. Interacts with tim and per; promoted by light conditions. FAD is required as a cofactor.

It is found in the cytoplasm. Its subcellular location is the perinuclear region. It localises to the nucleus. Its function is as follows. Blue light-dependent regulator that is the input of the circadian feedback loop. Has no photolyase activity for cyclobutane pyrimidine dimers or 6-4 photoproducts. Regulation of expression by light suggests a role in photoreception for locomotor activity rhythms. Functions, together with per, as a transcriptional repressor required for the oscillation of peripheral circadian clocks and for the correct specification of clock cells. Genes directly activated by the transcription factors Clock (Clk) and cycle (cyc) are repressed by cry. The sequence is that of Cryptochrome-1 from Culex quinquefasciatus (Southern house mosquito).